We begin with the raw amino-acid sequence, 251 residues long: Triosephosphate isomerase (251 aa).

9 to 11 serves as a coordination point for substrate; it reads NWK. The Electrophile role is filled by histidine 95. Glutamate 167 acts as the Proton acceptor in catalysis. Residues glycine 173, serine 213, and 234–235 contribute to the substrate site; that span reads GG.

This sequence belongs to the triosephosphate isomerase family. As to quaternary structure, homodimer.

It is found in the cytoplasm. The enzyme catalyses D-glyceraldehyde 3-phosphate = dihydroxyacetone phosphate. The protein operates within carbohydrate biosynthesis; gluconeogenesis. It functions in the pathway carbohydrate degradation; glycolysis; D-glyceraldehyde 3-phosphate from glycerone phosphate: step 1/1. Functionally, involved in the gluconeogenesis. Catalyzes stereospecifically the conversion of dihydroxyacetone phosphate (DHAP) to D-glyceraldehyde-3-phosphate (G3P). The protein is Triosephosphate isomerase of Carboxydothermus hydrogenoformans (strain ATCC BAA-161 / DSM 6008 / Z-2901).